The following is a 444-amino-acid chain: Tol-Pal system protein TolB (444 aa).

A signal peptide spans methionine 1–glycine 31.

The protein belongs to the TolB family. The Tol-Pal system is composed of five core proteins: the inner membrane proteins TolA, TolQ and TolR, the periplasmic protein TolB and the outer membrane protein Pal. They form a network linking the inner and outer membranes and the peptidoglycan layer.

The protein resides in the periplasm. Functionally, part of the Tol-Pal system, which plays a role in outer membrane invagination during cell division and is important for maintaining outer membrane integrity. The chain is Tol-Pal system protein TolB from Rhodopseudomonas palustris (strain ATCC BAA-98 / CGA009).